Reading from the N-terminus, the 58-residue chain is Leucine zipper protein 6 (58 aa).

Widely expressed, highest levels found in brain, placenta, spleen, testis, and ovary. Up-regulated in some tumor cells.

In Homo sapiens (Human), this protein is Leucine zipper protein 6 (LUZP6).